A 177-amino-acid polypeptide reads, in one-letter code: Large ribosomal subunit protein uL6 (177 aa).

This sequence belongs to the universal ribosomal protein uL6 family. In terms of assembly, part of the 50S ribosomal subunit.

This protein binds to the 23S rRNA, and is important in its secondary structure. It is located near the subunit interface in the base of the L7/L12 stalk, and near the tRNA binding site of the peptidyltransferase center. The protein is Large ribosomal subunit protein uL6 of Methanocella arvoryzae (strain DSM 22066 / NBRC 105507 / MRE50).